The chain runs to 521 residues: Medium/long-chain-fatty-acid--[acyl-carrier-protein] ligase MbtM (521 aa).

This sequence belongs to the ATP-dependent AMP-binding enzyme family.

It catalyses the reaction a long-chain fatty acid + holo-[ACP] + ATP = a long-chain fatty acyl-[ACP] + AMP + diphosphate. The catalysed reaction is a medium-chain fatty acid + holo-[ACP] + ATP = a medium-chain fatty acyl-[ACP] + AMP + diphosphate. It functions in the pathway siderophore biosynthesis; mycobactin biosynthesis. Activates lipidic moieties required for mycobactin biosynthesis. Converts medium- to long-chain aliphatic fatty acids into acyl adenylate, which is further transferred on to the phosphopantetheine arm of the carrier protein MbtL. The sequence is that of Medium/long-chain-fatty-acid--[acyl-carrier-protein] ligase MbtM (mbtM) from Mycobacterium sp. (strain MCS).